A 1948-amino-acid polypeptide reads, in one-letter code: Receptor-type tyrosine-protein phosphatase S (1948 aa).

An N-terminal signal peptide occupies residues 1–29; it reads MAPTWGPGMVSVVGPMGLLVVLLVGGCAA. At 30–1282 the chain is on the extracellular side; that stretch reads EEPPRFIKEP…PQPIVDGEEG (1253 aa). Ig-like C2-type domains are found at residues 33 to 123, 135 to 233, and 245 to 327; these read PRFI…AKLT, PNID…ANLY, and PRFS…AQIT. 2 disulfides stabilise this stretch: Cys54/Cys107 and Cys156/Cys216. The tract at residues 68–72 is important for binding to glycosaminoglycan chains; sequence KKGKK. Asn263 and Asn308 each carry an N-linked (GlcNAc...) asparagine glycan. A disulfide bridge connects residues Cys266 and Cys311. Fibronectin type-III domains lie at 334 to 424, 429 to 523, 527 to 616, 621 to 718, 723 to 831, 832 to 930, 931 to 1033, and 1036 to 1120; these read APGT…TGEQ, APRN…TQQG, QPMN…TLQS, PPQD…TDED, PPRK…TKGA, VLGR…TPRG, HPQI…FLRD, and SPKN…TAFN. Residues 700–724 are disordered; the sequence is TEVGPGPESSPVVVRTDEDVPSAPP. Positions 701 to 713 are enriched in low complexity; the sequence is EVGPGPESSPVVV. The N-linked (GlcNAc...) asparagine glycan is linked to Asn733. Asn940 is a glycosylation site (N-linked (GlcNAc...) asparagine). A helical membrane pass occupies residues 1283–1303; that stretch reads LIWVIGPVLAVVFIICIVIAI. Residues 1304–1948 lie on the Cytoplasmic side of the membrane; that stretch reads LLYKNKPDSK…YLGSFDHYAT (645 aa). 2 stretches are compositionally biased toward basic and acidic residues: residues 1311 to 1321 and 1331 to 1340; these read DSKRKDSEPRT and APHHPKDPVE. The interval 1311 to 1340 is disordered; it reads DSKRKDSEPRTKCLLNNADLAPHHPKDPVE. Tyrosine-protein phosphatase domains lie at 1393–1648 and 1680–1939; these read LSQE…LLEA and MELE…ALEY. Substrate-binding positions include Asp1557, 1589–1595, and Gln1633; that span reads CSAGVGR. Residue Cys1589 is the Phosphocysteine intermediate of the active site. Cys1880 (phosphocysteine intermediate) is an active-site residue.

Belongs to the protein-tyrosine phosphatase family. Receptor class 2A subfamily. Binding to large heparan sulfate proteoglycan structures promotes oligomerization. Binding to chondroitin sulfate proteoglycan does not lead to oligomerization. Interacts (via Ig-like domains) with NTRK3. Interacts (via Ig-like domains) with NTRK1, but does not form detectable complexes with NTRK2. Interacts with PPFIA1, PPFIA2 and PPFIA3. Post-translationally, a cleavage occurs, separating the extracellular domain from the transmembrane segment. This process called 'ectodomain shedding' is thought to be involved in receptor desensitization, signal transduction and/or membrane localization. Detected in peripheral blood plasmacytoid dendritic cells (at protein level). Detected in all tissues tested except for placenta and liver. Detected in peripheral blood plasmacytoid dendritic cells.

The protein localises to the cell membrane. It localises to the cell projection. The protein resides in the axon. Its subcellular location is the perikaryon. It is found in the cytoplasmic vesicle. The protein localises to the secretory vesicle. It localises to the synaptic vesicle membrane. The protein resides in the synapse. Its subcellular location is the synaptosome. It is found in the postsynaptic density. The protein localises to the neuron projection. It localises to the growth cone. It catalyses the reaction O-phospho-L-tyrosyl-[protein] + H2O = L-tyrosyl-[protein] + phosphate. Its function is as follows. Cell surface receptor that binds to glycosaminoglycans, including chondroitin sulfate proteoglycans and heparan sulfate proteoglycan. Binding to chondroitin sulfate and heparan sulfate proteoglycans has opposite effects on PTPRS oligomerization and regulation of neurite outgrowth. Contributes to the inhibition of neurite and axonal outgrowth by chondroitin sulfate proteoglycans, also after nerve transection. Plays a role in stimulating neurite outgrowth in response to the heparan sulfate proteoglycan GPC2. Required for normal brain development, especially for normal development of the pituitary gland and the olfactory bulb. Functions as a tyrosine phosphatase. Mediates dephosphorylation of NTRK1, NTRK2 and NTRK3. Plays a role in down-regulation of signaling cascades that lead to the activation of Akt and MAP kinases. Down-regulates TLR9-mediated activation of NF-kappa-B, as well as production of TNF, interferon alpha and interferon beta. The chain is Receptor-type tyrosine-protein phosphatase S (PTPRS) from Homo sapiens (Human).